The following is a 553-amino-acid chain: Telomere repeat-binding protein 2 (553 aa).

Positions 147-170 are disordered; sequence SSTEVGACGNGSPNESRDDVNLFS. The Ubiquitin-like domain maps to 285 to 364; that stretch reads VKLRIKSFRV…HLDSLGFSLE (80 aa). Positions 394-413 are disordered; it reads ALDSSHEPEPSPADSFGKLG. An HTH myb-type domain is found at 448–507; it reads AQRRIRRPFSVTEVEALVQAVEKLGTGRWRDVKVRAFEDADHRTYVDLKDKWKTLVHTAR. Positions 476–503 form a DNA-binding region, H-T-H motif; it reads WRDVKVRAFEDADHRTYVDLKDKWKTLV.

In terms of assembly, homodimer and heterodimer with TRP1. Interacts with SNL1. As to expression, expressed ubiquitously. Highest expression in flowers and leaves.

Its subcellular location is the nucleus. Binds specifically to the plant telomeric double-stranded DNA sequences. At least 2 repeats of telomeric sequences are required for binding. Induces DNA bending. The sequence is that of Telomere repeat-binding protein 2 (TRP2) from Arabidopsis thaliana (Mouse-ear cress).